The sequence spans 513 residues: HTH-type transcriptional regulatory protein TyrR (513 aa).

One can recognise an ACT domain in the interval 2 to 72; sequence RLEVFCEDRL…GVTDVRTVPW (71 aa). Residues 78–114 enclose the PAS domain; it reads EHLALSALLEALPEPVLSVDMKSKVDMANPASCQLFG. Residues 206–428 enclose the Sigma-54 factor interaction domain; it reads IVAVSPKMKH…LKNAIYRALT (223 aa). ATP is bound by residues 234–241 and 290–299; these read GDTGTGKD and ANGGSVLLDE. The segment at residues 482–502 is a DNA-binding region (H-T-H motif); that stretch reads STRKLAKRLGVSHTAIANKLR.

In terms of assembly, homodimer. In presence of tyrosine (or high concentrations of phenylalanine or tryptophan) and ATP, it self-associates to form an hexamer. At low tyrosine concentrations, homodimers can bind to certain recognition sequences referred to as 'strong TyrR boxes'. Homohexamers are the active repressing species, interacting with two or three tyrR boxes in the targeted regulatory DNA, including 'strong TyrR boxes' and lower-affinity sites called 'weak TyrR boxes'.

It localises to the cytoplasm. Binding of ATP strongly enhances the affinity of TyrR for tyrosine. In terms of biological role, dual transcriptional regulator of the TyrR regulon, which includes a number of genes coding for proteins involved in the biosynthesis or transport of the three aromatic amino acids, phenylalanine, tyrosine and tryptophan. These three aromatic amino acids act as effectors which bind to the TyrR protein to form an active regulatory protein. Modulates the expression of at least eight unlinked transcription units, including aroF, aroG, aroLM, aroP, mtr, tyrA, tyrB and tyrP. In most cases TyrR acts as a repressor, but positive effects have been observed on the tyrP gene, which is repressed in the presence of tyrosine and activated at high phenylalanine concentrations. Is also involved in activation, but not repression, of mtr expression in association with phenylalanine or tyrosine. Acts by binding specifically to TyrR boxes in the promoter region of the target genes. The sequence is that of HTH-type transcriptional regulatory protein TyrR from Escherichia coli (strain K12).